The primary structure comprises 437 residues: F-box/FBD/LRR-repeat protein At5g22700 (437 aa).

The F-box domain occupies 5–51 (GDRISSLPDELLCQILSNLPTKNAVTTSILSTRWRSIWLSTPVLDID). 7 LRR repeats span residues 86 to 113 (RDDVDMCTIMPWIQDAVNRRIQHLEVDC), 134 to 160 (SLRLHFVTLHRYEFVSLPNLKVMHLEE), 161 to 186 (NIYYCLETLENFISSCPVLEDLTVVR), 187 to 210 (IVDIITEKILRVRSRSLNSLKLVL), 215 to 240 (GWFIDDIDEWKVIIDAPRLAYLSLKD), 272 to 297 (PVTFERSNVGKLLTGLSSIRDLTISG), and 322 to 350 (NARFYDCDLEMLPCVLESCPNLKSLVLGL). The 46-residue stretch at 361–406 (RVSSVPPCFLSSLEFVEIRSRLCRKRYVMKVARYFAKNSVMLKKFV) folds into the FBD domain.

The chain is F-box/FBD/LRR-repeat protein At5g22700 from Arabidopsis thaliana (Mouse-ear cress).